Reading from the N-terminus, the 57-residue chain is Large ribosomal subunit protein bL32 (57 aa).

Residues 1-19 (MAVPKRRMSRANTRSRRAQ) are compositionally biased toward basic residues. The interval 1–20 (MAVPKRRMSRANTRSRRAQW) is disordered.

The protein belongs to the bacterial ribosomal protein bL32 family.

The sequence is that of Large ribosomal subunit protein bL32 from Mycolicibacterium smegmatis (strain ATCC 700084 / mc(2)155) (Mycobacterium smegmatis).